An 8922-amino-acid polypeptide reads, in one-letter code: Protein clarinet (8922 aa).

The segment at 11–35 (SKGPPLEEVREESEEDAQVPEQVVS) is disordered. The segment covering 19–28 (VREESEEDAQ) has biased composition (acidic residues). Residues 385–405 (KDETKLILKSVEDKLETTEIE) are a coiled coil. Disordered regions lie at residues 527–579 (QEAA…EPEL), 622–673 (IVIS…EPEL), 687–860 (LAEK…KEPE), 880–955 (SFEQ…EPEL), 971–1049 (EQSS…EPEL), 1062–1139 (SSAE…MESR), 1151–1331 (IARI…EPEL), 1347–1420 (EQSS…VMES), 1444–1520 (SFEQ…PELT), 1538–1619 (SFEQ…EEID), 1632–1710 (SFEQ…LTQE), 1726–1801 (SFEQ…VPEL), 1820–1898 (SFEQ…LTQE), 1939–1992 (VISE…LTQE), 2032–2084 (IVIS…SELT), 2126–2175 (IVIS…SKEP), 2194–2213 (QSSF…PVRL), 2220–2246 (IVIS…YDQD), 2329–2403 (SFEQ…KKPE), 2423–2497 (SFEQ…KPEL), 2516–2594 (SFEQ…LTQE), 2610–2684 (SFEQ…KEPE), 2704–2845 (SFEQ…ERPF), 2892–2963 (SFEQ…MESK), 2983–3155 (EQSS…EPEL), 3171–3249 (EQSS…EPEL), 3268–3337 (SFEQ…PVML), 3619–3639 (SITP…PTTD), 3995–4079 (AEPV…QEEI), 4117–4169 (IVIS…PELT), 4181–4271 (SLAE…STTI), 4557–4624 (QASA…TQEE), 4636–4656 (EQSS…PVRL), 4666–4685 (SEQH…YERS), 4730–4801 (EQSS…GVTQ), 4855–4899 (PANP…PLQD), 5004–5036 (PEDF…NGLT), 5360–5379 (LAMF…RKES), 5390–5413 (RRSS…DTAL), 5484–5511 (KKQI…ENEV), 5540–5572 (PPIA…SQFG), 6194–6303 (AEPV…ESES), 6354–6437 (DVES…GSRM), 6487–6510 (SSKS…QIGI), 6577–6609 (ARFP…LDDL), 6668–6691 (NAET…SVAR), 6728–6768 (AEFE…VPPG), 6998–7018 (TERK…TSTS), 7045–7098 (ARSR…DDFD), 7137–7175 (FDGD…FEKP), 7202–7263 (EAPS…YPDR), 7313–7350 (KTTT…EIEE), 7598–7623 (DSVR…SPGM), 7760–7797 (TRRH…SRPT), and 7842–7881 (HIRQ…SSSV). A compositionally biased stretch (basic and acidic residues) spans 531–552 (SDNHEKERSSATSKADYERSFD). Basic and acidic residues predominate over residues 760–776 (MESKEPELTQEEIDHIA). The segment covering 1062-1076 (SSAEQSSFEQASTVP) has biased composition (low complexity). Positions 1230–1244 (MESKEPELTQEEIDH) are enriched in basic and acidic residues. Residues 1251-1261 (IAEQSSFEQAS) are compositionally biased toward polar residues. Composition is skewed to basic and acidic residues over residues 1606–1619 (MESK…EEID) and 1700–1710 (MESKEPELTQE). Composition is skewed to basic and acidic residues over residues 1888 to 1898 (MESKEPELTQE) and 1982 to 1992 (MESKESELTQE). Over residues 2194-2204 (QSSFEQASTIT) the composition is skewed to polar residues. The span at 2584–2594 (MESKEPELTQE) shows a compositional bias: basic and acidic residues. A compositionally biased stretch (basic and acidic residues) spans 2772 to 2788 (MESKEPELTQEEIDHIA). Over residues 2793–2803 (LAEQSSFEQAS) the composition is skewed to polar residues. Positions 3076 to 3085 (APSSSFEQAS) are enriched in polar residues. Residues 4035–4044 (GTSFPDNAET) show a composition bias toward polar residues. Residues 4065 to 4079 (PVMKSKEPELTQEEI) are compositionally biased toward basic and acidic residues. Composition is skewed to polar residues over residues 4182–4195 (LAEQ…STIP), 4223–4234 (SATSGADYQQSF), and 4255–4271 (MEST…STTI). A compositionally biased stretch (basic and acidic residues) spans 4571 to 4580 (IVEKREDDKS). Positions 4581–4594 (NITSGADYQQSFDQ) are enriched in polar residues. A compositionally biased stretch (basic and acidic residues) spans 4613-4624 (MESKEPELTQEE). The span at 4636 to 4645 (EQSSFEQAST) shows a compositional bias: polar residues. Polar residues predominate over residues 4730 to 4739 (EQSSFEQAST). Positions 4871-4890 (EGSSSATSGADIPSSFDISS) are enriched in low complexity. A compositionally biased stretch (polar residues) spans 5009 to 5023 (EATSGADTESISETT). Over residues 5390-5407 (RRSSGADSRASNDSSASR) the composition is skewed to low complexity. The segment covering 5486 to 5499 (QISSRTESTNSRVS) has biased composition (polar residues). A compositionally biased stretch (pro residues) spans 5540 to 5550 (PPIAISHPTPP). Low complexity predominate over residues 5560-5572 (RHSSGSSAHSQFG). Composition is skewed to polar residues over residues 6225-6245 (ASSG…TSGF) and 6270-6284 (KTVS…MASR). Basic and acidic residues-rich tracts occupy residues 6285–6303 (KSSE…ESES) and 6376–6422 (GEGE…EESL). Positions 6494–6505 (LGTSAPTKSIPS) are enriched in polar residues. A compositionally biased stretch (low complexity) spans 6590-6600 (SPSVMSSSIMS). Polar residues predominate over residues 6670-6687 (ETDSSSSVITSRQPSRSP). Positions 6735–6747 (SQVPSRQPSRSPS) are enriched in low complexity. Composition is skewed to basic and acidic residues over residues 6998 to 7008 (TERKQREESPT) and 7045 to 7069 (ARSR…HTPE). Over residues 7071–7086 (SSTAVVTDVPSVSPVT) the composition is skewed to low complexity. Over residues 7155 to 7175 (TTKKTSDFDFPKETDEVFEKP) the composition is skewed to basic and acidic residues. A compositionally biased stretch (acidic residues) spans 7248–7260 (SDEESCSEDDEEY). Residues 7313-7331 (KTTTSQTPSTSTKPTVTAP) show a composition bias toward low complexity. Residues 7599 to 7609 (SVRDDNERNEN) are compositionally biased toward basic and acidic residues. 2 stretches are compositionally biased toward low complexity: residues 7777–7788 (SSASRPPSAAGS) and 7854–7880 (AQTG…GSSS). Positions 7895-7915 (KKELKDVLIQRKQRLEATEIE) form a coiled coil. The tract at residues 8510 to 8562 (SRRRAQETALTSSNKISTGSRSYARRPIRPSSYRNPEATNSMPDRHVARRTAE) is disordered. Polar residues-rich tracts occupy residues 8517 to 8530 (TALT…TGSR) and 8541 to 8551 (SYRNPEATNSM). Over residues 8552–8562 (PDRHVARRTAE) the composition is skewed to basic and acidic residues. A PDZ domain is found at 8570–8661 (RILLTRSYKH…EIEMVIRTYK (92 aa)). The 122-residue stretch at 8714–8835 (CHGHIQVSLG…SAINTGPRWY (122 aa)) folds into the C2 domain.

As to expression, expressed in the nervous system.

It is found in the synapse. Its subcellular location is the cell projection. The protein resides in the axon. Its function is as follows. Required for synapse development in the active zone of presynaptic terminals of specific neurons including serotonergic NSM neurons. The active zone is a protein-dense neuronal region within the presynaptic bouton, from which synaptic vesicles send neurotransmitter signals across the synapse. Plays a role in the recruitment and clustering of synaptic vesicles in the active zone of presynaptic terminals in serotonergic NSM neurons, and coordinates the release of synaptic vesicles at presynaptic terminals to regulate neurotransmission at neuromuscular junctions. Regulates synapse number in inhibitory motor neurons and plays a role in spontaneous postsynaptic synaptic vesicle release in muscle cells. In Caenorhabditis elegans, this protein is Protein clarinet.